The primary structure comprises 638 residues: Phosphomethylpyrimidine synthase (638 aa).

Residues asparagine 243, methionine 272, tyrosine 301, histidine 337, 357–359 (SRG), 398–401 (DGLR), and glutamate 437 contribute to the substrate site. Zn(2+) is bound at residue histidine 441. Residue tyrosine 464 coordinates substrate. Histidine 505 serves as a coordination point for Zn(2+). Residues cysteine 585, cysteine 588, and cysteine 593 each contribute to the [4Fe-4S] cluster site.

The protein belongs to the ThiC family. As to quaternary structure, homodimer. Requires [4Fe-4S] cluster as cofactor.

It catalyses the reaction 5-amino-1-(5-phospho-beta-D-ribosyl)imidazole + S-adenosyl-L-methionine = 4-amino-2-methyl-5-(phosphooxymethyl)pyrimidine + CO + 5'-deoxyadenosine + formate + L-methionine + 3 H(+). Its pathway is cofactor biosynthesis; thiamine diphosphate biosynthesis. In terms of biological role, catalyzes the synthesis of the hydroxymethylpyrimidine phosphate (HMP-P) moiety of thiamine from aminoimidazole ribotide (AIR) in a radical S-adenosyl-L-methionine (SAM)-dependent reaction. The protein is Phosphomethylpyrimidine synthase of Aromatoleum aromaticum (strain DSM 19018 / LMG 30748 / EbN1) (Azoarcus sp. (strain EbN1)).